The following is a 1297-amino-acid chain: DNA-directed RNA polymerase subunit beta'' (1297 aa).

Zn(2+) contacts are provided by Cys220, Cys293, Cys300, and Cys303. Residues 1278 to 1288 (RRRKQNTKTRK) are compositionally biased toward basic residues. Residues 1278–1297 (RRRKQNTKTRKNNLFSLNEK) are disordered.

It belongs to the RNA polymerase beta' chain family. RpoC2 subfamily. As to quaternary structure, in plastids the minimal PEP RNA polymerase catalytic core is composed of four subunits: alpha, beta, beta', and beta''. When a (nuclear-encoded) sigma factor is associated with the core the holoenzyme is formed, which can initiate transcription. Zn(2+) is required as a cofactor.

It localises to the plastid. Its subcellular location is the chloroplast. The catalysed reaction is RNA(n) + a ribonucleoside 5'-triphosphate = RNA(n+1) + diphosphate. In terms of biological role, DNA-dependent RNA polymerase catalyzes the transcription of DNA into RNA using the four ribonucleoside triphosphates as substrates. In Welwitschia mirabilis (Tree tumbo), this protein is DNA-directed RNA polymerase subunit beta''.